Here is a 160-residue protein sequence, read N- to C-terminus: Nucleotide-binding protein Patl_4311 (160 aa).

It belongs to the YajQ family.

Nucleotide-binding protein. The chain is Nucleotide-binding protein Patl_4311 from Pseudoalteromonas atlantica (strain T6c / ATCC BAA-1087).